A 179-amino-acid chain; its full sequence is Ubiquitin-conjugating enzyme E2 C (179 aa).

A disordered region spans residues Met1–Val31. Residues Ser30–Ile179 enclose the UBC core domain. Residue Cys114 is the Glycyl thioester intermediate of the active site.

It belongs to the ubiquitin-conjugating enzyme family. As to quaternary structure, component of the APC/C complex. Post-translationally, autoubiquitinated by the APC/C complex, leading to its degradation by the proteasome.

It carries out the reaction S-ubiquitinyl-[E1 ubiquitin-activating enzyme]-L-cysteine + [E2 ubiquitin-conjugating enzyme]-L-cysteine = [E1 ubiquitin-activating enzyme]-L-cysteine + S-ubiquitinyl-[E2 ubiquitin-conjugating enzyme]-L-cysteine.. The catalysed reaction is S-ubiquitinyl-[E1 ubiquitin-activating enzyme]-L-cysteine + [acceptor protein]-L-lysine = [E1 ubiquitin-activating enzyme]-L-cysteine + N(6)-monoubiquitinyl-[acceptor protein]-L-lysine.. Its pathway is protein modification; protein ubiquitination. Catalyzes the covalent attachment of ubiquitin to other proteins. Acts as an essential factor of the anaphase promoting complex/cyclosome (APC/C), a cell cycle-regulated ubiquitin ligase that controls progression through mitosis. Acts by initiating 'Lys-11'-linked polyubiquitin chains on APC/C substrates, leading to the degradation of APC/C substrates by the proteasome and promoting mitotic exit. The polypeptide is Ubiquitin-conjugating enzyme E2 C (ube2c) (Xenopus laevis (African clawed frog)).